Consider the following 156-residue polypeptide: Ribosomal RNA large subunit methyltransferase H (156 aa).

Residues leucine 73, glycine 104, and 123 to 128 contribute to the S-adenosyl-L-methionine site; that span reads IGPLTL.

Belongs to the RNA methyltransferase RlmH family. As to quaternary structure, homodimer.

Its subcellular location is the cytoplasm. It catalyses the reaction pseudouridine(1915) in 23S rRNA + S-adenosyl-L-methionine = N(3)-methylpseudouridine(1915) in 23S rRNA + S-adenosyl-L-homocysteine + H(+). In terms of biological role, specifically methylates the pseudouridine at position 1915 (m3Psi1915) in 23S rRNA. In Stenotrophomonas maltophilia (strain K279a), this protein is Ribosomal RNA large subunit methyltransferase H.